The chain runs to 347 residues: NADH-ubiquinone oxidoreductase chain 2 (347 aa).

The next 10 helical transmembrane spans lie at 1–21 (MTPM…TLTL), 26–46 (WLLM…LLTY), 56–76 (AIKY…AASL), 96–116 (GIMT…YWVP), 153–171 (ILLT…NGLN), 178–198 (VMAY…IYFP), 199–219 (TLTT…FTVF), 237–257 (APIM…LPPL), 277–297 (IMAT…MRII), and 326–346 (LPTL…FITL).

The protein belongs to the complex I subunit 2 family. As to quaternary structure, core subunit of respiratory chain NADH dehydrogenase (Complex I) which is composed of 45 different subunits. Interacts with TMEM242.

The protein localises to the mitochondrion inner membrane. The enzyme catalyses a ubiquinone + NADH + 5 H(+)(in) = a ubiquinol + NAD(+) + 4 H(+)(out). In terms of biological role, core subunit of the mitochondrial membrane respiratory chain NADH dehydrogenase (Complex I) which catalyzes electron transfer from NADH through the respiratory chain, using ubiquinone as an electron acceptor. Essential for the catalytic activity and assembly of complex I. The polypeptide is NADH-ubiquinone oxidoreductase chain 2 (Ornithorhynchus anatinus (Duckbill platypus)).